The sequence spans 2924 residues: Probable polyketide synthase 6 (2924 aa).

Residues 11-442 (EKGVAIVGIG…GSNCCLLISE (432 aa)) enclose the Ketosynthase family 3 (KS3) domain. Active-site for beta-ketoacyl synthase activity residues include Cys181, His323, and His362. Residues 635–668 (GVNPSFILGHSLGEISASYCSGMIDLDTFCYTVY) are acyl/malonyl transferase. Ser645 acts as the For acyl/malonyl transferase activity in catalysis. Residues 925–1047 (IDHLGLSNSY…SNFQLLDHGN (123 aa)) form an N-terminal hotdog fold region. The region spanning 925–1210 (IDHLGLSNSY…CKSLIPIKDS (286 aa)) is the PKS/mFAS DH domain. The active-site Proton acceptor; for dehydratase activity is His959. The interval 1064-1210 (NLSKLTKNEL…CKSLIPIKDS (147 aa)) is C-terminal hotdog fold. Asp1122 serves as the catalytic Proton donor; for dehydratase activity. One can recognise a Carrier domain in the interval 2431-2508 (TGNKNIDELF…ISIKMILNSL (78 aa)). Ser2468 is modified (O-(pantetheine 4'-phosphoryl)serine). A helical membrane pass occupies residues 2551 to 2571 (KIILLTGTTGFLGGFLLFNML).

It depends on pantetheine 4'-phosphate as a cofactor.

The protein localises to the membrane. Probable polyketide synthase. In Dictyostelium discoideum (Social amoeba), this protein is Probable polyketide synthase 6 (pks6).